The chain runs to 455 residues: Bifunctional protein GlmU (455 aa).

Positions 1–226 are pyrophosphorylase; it reads MGLSVVILAA…EFEILGVNDR (226 aa). Residues 8 to 11, K22, Q73, 78 to 79, 99 to 101, G136, E151, N166, and N224 each bind UDP-N-acetyl-alpha-D-glucosamine; these read LAAG, GT, and YGD. D101 contacts Mg(2+). N224 provides a ligand contact to Mg(2+). Residues 227-247 form a linker region; the sequence is TQLASLERVWQRNVAEKIMAK. The interval 248 to 455 is N-acetyltransferase; the sequence is GVSIADPNRF…WQRSVKKTDK (208 aa). 2 residues coordinate UDP-N-acetyl-alpha-D-glucosamine: R330 and K348. Catalysis depends on H360, which acts as the Proton acceptor. Residues Y363 and N374 each coordinate UDP-N-acetyl-alpha-D-glucosamine. Acetyl-CoA is bound by residues A377, 383–384, S402, A420, and R437; that span reads NY.

In the N-terminal section; belongs to the N-acetylglucosamine-1-phosphate uridyltransferase family. This sequence in the C-terminal section; belongs to the transferase hexapeptide repeat family. Homotrimer. The cofactor is Mg(2+).

It localises to the cytoplasm. It carries out the reaction alpha-D-glucosamine 1-phosphate + acetyl-CoA = N-acetyl-alpha-D-glucosamine 1-phosphate + CoA + H(+). The catalysed reaction is N-acetyl-alpha-D-glucosamine 1-phosphate + UTP + H(+) = UDP-N-acetyl-alpha-D-glucosamine + diphosphate. The protein operates within nucleotide-sugar biosynthesis; UDP-N-acetyl-alpha-D-glucosamine biosynthesis; N-acetyl-alpha-D-glucosamine 1-phosphate from alpha-D-glucosamine 6-phosphate (route II): step 2/2. It participates in nucleotide-sugar biosynthesis; UDP-N-acetyl-alpha-D-glucosamine biosynthesis; UDP-N-acetyl-alpha-D-glucosamine from N-acetyl-alpha-D-glucosamine 1-phosphate: step 1/1. Its pathway is bacterial outer membrane biogenesis; LPS lipid A biosynthesis. Its function is as follows. Catalyzes the last two sequential reactions in the de novo biosynthetic pathway for UDP-N-acetylglucosamine (UDP-GlcNAc). The C-terminal domain catalyzes the transfer of acetyl group from acetyl coenzyme A to glucosamine-1-phosphate (GlcN-1-P) to produce N-acetylglucosamine-1-phosphate (GlcNAc-1-P), which is converted into UDP-GlcNAc by the transfer of uridine 5-monophosphate (from uridine 5-triphosphate), a reaction catalyzed by the N-terminal domain. This chain is Bifunctional protein GlmU, found in Francisella tularensis subsp. holarctica (strain OSU18).